Reading from the N-terminus, the 427-residue chain is Serine--tRNA ligase (427 aa).

Position 233–235 (233–235 (TAE)) interacts with L-serine. Residue 264–266 (RSE) participates in ATP binding. An L-serine-binding site is contributed by Glu287. Residue 351-354 (EISS) coordinates ATP. Position 386 (Ser386) interacts with L-serine.

The protein belongs to the class-II aminoacyl-tRNA synthetase family. Type-1 seryl-tRNA synthetase subfamily. Homodimer. The tRNA molecule binds across the dimer.

It localises to the cytoplasm. It carries out the reaction tRNA(Ser) + L-serine + ATP = L-seryl-tRNA(Ser) + AMP + diphosphate + H(+). The catalysed reaction is tRNA(Sec) + L-serine + ATP = L-seryl-tRNA(Sec) + AMP + diphosphate + H(+). The protein operates within aminoacyl-tRNA biosynthesis; selenocysteinyl-tRNA(Sec) biosynthesis; L-seryl-tRNA(Sec) from L-serine and tRNA(Sec): step 1/1. Functionally, catalyzes the attachment of serine to tRNA(Ser). Is also able to aminoacylate tRNA(Sec) with serine, to form the misacylated tRNA L-seryl-tRNA(Sec), which will be further converted into selenocysteinyl-tRNA(Sec). This Thiobacillus denitrificans (strain ATCC 25259 / T1) protein is Serine--tRNA ligase.